The sequence spans 346 residues: DNA primase small subunit PriS (346 aa).

Catalysis depends on residues D97, D99, and D278.

Belongs to the eukaryotic-type primase small subunit family. As to quaternary structure, heterodimer of a small subunit (PriS) and a large subunit (PriL). The cofactor is Mg(2+). It depends on Mn(2+) as a cofactor.

Catalytic subunit of DNA primase, an RNA polymerase that catalyzes the synthesis of short RNA molecules used as primers for DNA polymerase during DNA replication. The small subunit contains the primase catalytic core and has DNA synthesis activity on its own. Binding to the large subunit stabilizes and modulates the activity, increasing the rate of DNA synthesis while decreasing the length of the DNA fragments, and conferring RNA synthesis capability. The DNA polymerase activity may enable DNA primase to also catalyze primer extension after primer synthesis. May also play a role in DNA repair. The polypeptide is DNA primase small subunit PriS (Thermococcus onnurineus (strain NA1)).